The primary structure comprises 73 residues: DNA gyrase inhibitor YacG (73 aa).

Zn(2+)-binding residues include cysteine 14, cysteine 17, cysteine 30, and cysteine 34. The segment at 54-73 (AEQADDTAGPGAAEDDTDSH) is disordered.

It belongs to the DNA gyrase inhibitor YacG family. Interacts with GyrB. Zn(2+) serves as cofactor.

Functionally, inhibits all the catalytic activities of DNA gyrase by preventing its interaction with DNA. Acts by binding directly to the C-terminal domain of GyrB, which probably disrupts DNA binding by the gyrase. The polypeptide is DNA gyrase inhibitor YacG (Hyphomonas neptunium (strain ATCC 15444)).